The primary structure comprises 364 residues: Phosphoserine aminotransferase (364 aa).

Arg-42 contributes to the L-glutamate binding site. Residues 76–77, Trp-100, Thr-150, Asp-169, and Gln-192 contribute to the pyridoxal 5'-phosphate site; that span reads AS. At Lys-193 the chain carries N6-(pyridoxal phosphate)lysine. 234-235 provides a ligand contact to pyridoxal 5'-phosphate; that stretch reads NT.

It belongs to the class-V pyridoxal-phosphate-dependent aminotransferase family. SerC subfamily. As to quaternary structure, homodimer. Requires pyridoxal 5'-phosphate as cofactor.

It is found in the cytoplasm. It catalyses the reaction O-phospho-L-serine + 2-oxoglutarate = 3-phosphooxypyruvate + L-glutamate. It carries out the reaction 4-(phosphooxy)-L-threonine + 2-oxoglutarate = (R)-3-hydroxy-2-oxo-4-phosphooxybutanoate + L-glutamate. The protein operates within amino-acid biosynthesis; L-serine biosynthesis; L-serine from 3-phospho-D-glycerate: step 2/3. Catalyzes the reversible conversion of 3-phosphohydroxypyruvate to phosphoserine and of 3-hydroxy-2-oxo-4-phosphonooxybutanoate to phosphohydroxythreonine. In Shouchella clausii (strain KSM-K16) (Alkalihalobacillus clausii), this protein is Phosphoserine aminotransferase.